Consider the following 145-residue polypeptide: Gene 34.1 protein (145 aa).

Putative excisionase. The protein is Gene 34.1 protein (34.1) of Mycobacterium (Mycobacteriophage D29).